Here is a 253-residue protein sequence, read N- to C-terminus: uncharacterized protein (253 aa).

The segment at 211–241 (TTRRKRYREDRDSGEDLGAESKRGNGSVRYT) is disordered.

This is an uncharacterized protein from Ictalurid herpesvirus 1 (strain Auburn) (IcHV-1).